The chain runs to 180 residues: Ribulose bisphosphate carboxylase small subunit, chloroplastic (180 aa).

The transit peptide at 1–56 directs the protein to the chloroplast; sequence MASSVLSSAAVATRSNVAQANMVAPFTGLKSAASFPVSRKQNLDITSIASNGGRVQ.

The protein belongs to the RuBisCO small chain family. Heterohexadecamer of 8 large and 8 small subunits. In terms of assembly, (Microbial infection) Binds to tobamovirus movement protein at the plasmodesmata (e.g. tomato mosaic virus MP AC P69513); this interaction seems required for viral systemic movement.

The protein resides in the plastid. The protein localises to the chloroplast. Its subcellular location is the cell junction. It is found in the plasmodesma. In terms of biological role, ruBisCO catalyzes two reactions: the carboxylation of D-ribulose 1,5-bisphosphate, the primary event in carbon dioxide fixation, as well as the oxidative fragmentation of the pentose substrate. Both reactions occur simultaneously and in competition at the same active site. Although the small subunit is not catalytic it is essential for maximal activity. Involved in antiviral defenses. Its function is as follows. (Microbial infection) Required for tobamovirus movement (e.g. tobacco mosaic virus (TMV)). The polypeptide is Ribulose bisphosphate carboxylase small subunit, chloroplastic (Nicotiana benthamiana).